We begin with the raw amino-acid sequence, 1332 residues long: Delta-poly-L-ornithine synthetase (1332 aa).

3 residues coordinate L-ornithine: Asp217, Glu221, and Thr304. D-ornithine-binding residues include Glu221, Thr304, Gly306, and Thr308. The L-ornithine site is built by Val312 and Ser313. Ser313 contacts D-ornithine. The region spanning 524-601 (QPQNPAEEIL…AIAALMLEQP (78 aa)) is the Carrier domain. Ser560 carries the O-(pantetheine 4'-phosphoryl)serine modification. The next 6 helical transmembrane spans lie at 629 to 649 (LVTI…PFFT), 664 to 684 (AIAL…VLSI), 868 to 888 (VSAL…FLLV), 908 to 928 (LYYF…TAVI), 1120 to 1140 (IVLP…DVID), and 1151 to 1171 (LVAL…IVAL).

It belongs to the ATP-dependent AMP-binding enzyme family. Requires pantetheine 4'-phosphate as cofactor.

It localises to the cell membrane. The enzyme catalyses n L-ornithine + n ATP + H2O = N(5)-(L-ornithyl)-[N(5)-(L-ornithyl)]n-1 + n AMP + n diphosphate + n H(+). It carries out the reaction n D-ornithine + n ATP + H2O = N(5)-(D-ornithyl)-[N(5)-(D-ornithyl)]n-1 + n AMP + n diphosphate + n H(+). Catalyzes the polymerization of L-ornithine, generating poly-L-ornithine composed of 7-12 amino acid units joined via isopeptide bonds between the carboxylate and the side chain amine. This polymer exhibits potent antifungal activity and thus may have a potential role in survival benefit for A.baumannii. The reaction occurs via ATP-dependent adenylation of the substrate. Can also adenylate D-ornithine with similar efficiency and thus may produce D-ornithine polymers. The polypeptide is Delta-poly-L-ornithine synthetase (Acinetobacter baumannii (strain AB307-0294)).